Here is a 312-residue protein sequence, read N- to C-terminus: 6-hydroxy-3-succinoylpyridine 3-monooxygenase HspA (312 aa).

The 197-residue stretch at 14-210 (IYIDGYNFYY…RSANTDLIKF (197 aa)) folds into the NYN domain.

It catalyses the reaction 4-(6-hydroxypyridin-3-yl)-4-oxobutanoate + 2 NADH + O2 + 2 H(+) = 2,5-dihydroxypyridine + succinate semialdehyde + 2 NAD(+) + H2O. It participates in alkaloid degradation; nicotine degradation. Its function is as follows. Involved in the nicotine degradation. Catalyzes the cleavage of 6-hydroxy-3-succinoylpyridine (HSP) by incorporation of oxygen at the 3-position to produce to 2,5-dihydroxypyridine (DHP) and succinic semialdehyde. The chain is 6-hydroxy-3-succinoylpyridine 3-monooxygenase HspA from Pseudomonas putida (strain DSM 28022 / S16).